We begin with the raw amino-acid sequence, 778 residues long: Dapper homolog 1 (778 aa).

Basic and acidic residues-rich tracts occupy residues 1 to 10 (MKPDAAREPE) and 18 to 40 (AEAE…TRER). A disordered region spans residues 1–40 (MKPDAAREPEPLSPGRGAEAEGRWRERGEADTERQRTRER). The interval 85–149 (DAAQRSRLEE…SEEHLETDSR (65 aa)) is required for self-association. Positions 85–149 (DAAQRSRLEE…SEEHLETDSR (65 aa)) form a coiled coil. The Nuclear export signal signature appears at 125–134 (LDKQISDLRL). Disordered stretches follow at residues 305–324 (KTHP…DPTK), 359–386 (GGIT…QLES), 397–416 (AGAA…KAAS), 428–468 (ESMK…SQKN), 544–616 (EKPR…HKRT), and 694–721 (NCFG…SEES). Residues 375–386 (RSKDSKTDQLES) show a composition bias toward basic and acidic residues. Residues 432-443 (ESNQASAVSPKT) show a composition bias toward polar residues. The Bipartite nuclear localization signal motif lies at 551 to 564 (KKCRFPDDSDTNKK). The segment covering 554–563 (RFPDDSDTNK) has biased composition (basic and acidic residues). Over residues 564–574 (KFRKTSAKGRR) the composition is skewed to basic residues. The segment covering 694–704 (NCFGDSESSVS) has biased composition (polar residues). Residues 768–778 (RSGSLKLMTTV) carry the PDZ-binding motif. A Phosphoserine; by PKA modification is found at Ser-769.

This sequence belongs to the dapper family. As to quaternary structure, can form homodimers and heterodimers with DACT2 or DACT3. Interacts with CSNK1D, PKA catalytic subunit, PKC-type kinase, CSNK2A1, CSNK2B, DVL1, DLV2, DVAL3, VANGL1, VANGL2, CTNND1 and HDAC1. Interacts with GSK3B; the interaction is indicative for an association of DACT1 with the beta-catenin destruction complex. Interacts with GSK3A. Interacts with YWHAB; the interaction is enhanced by PKA phosphorylating DACT1 at Ser-769. Interacts with CTNNB1. In terms of tissue distribution, expressed in multiple tissues including brain, heart, kidney, liver and testis.

The protein localises to the cytoplasm. Its subcellular location is the nucleus. It is found in the synapse. Its function is as follows. Involved in regulation of intracellular signaling pathways during development. Specifically thought to play a role in canonical and/or non-canonical Wnt signaling pathways through interaction with DSH (Dishevelled) family proteins. The activation/inhibition of Wnt signaling may depend on the phosphorylation status. Proposed to regulate the degradation of CTNNB1/beta-catenin, thereby modulating the transcriptional activation of target genes of the Wnt signaling pathway. Its function in stabilizing CTNNB1 may involve inhibition of GSK3B activity. Promotes the membrane localization of CTNNB1. The cytoplasmic form can induce DVL2 degradation via a lysosome-dependent mechanism; the function is inhibited by PKA-induced binding to 14-3-3 proteins, such as YWHAB. Seems to be involved in morphogenesis at the primitive streak by regulating VANGL2 and DVL2; the function seems to be independent of canonical Wnt signaling and rather involves the non-canonical Wnt/planar cell polarity (PCP) pathway. The nuclear form may prevent the formation of LEF1:CTNNB1 complex and recruit HDAC1 to LEF1 at target gene promoters to repress transcription thus antagonizing Wnt signaling. May be involved in positive regulation of fat cell differentiation. During neuronal differentiation may be involved in excitatory synapse organization, and dendrite formation and establishment of spines. The sequence is that of Dapper homolog 1 (Dact1) from Mus musculus (Mouse).